Here is a 184-residue protein sequence, read N- to C-terminus: Photosystem I assembly protein Ycf4 (184 aa).

Transmembrane regions (helical) follow at residues Asn21–Tyr43 and Leu58–Ser78.

The protein belongs to the Ycf4 family.

It is found in the plastid. It localises to the chloroplast thylakoid membrane. In terms of biological role, seems to be required for the assembly of the photosystem I complex. The polypeptide is Photosystem I assembly protein Ycf4 (Pinus thunbergii (Japanese black pine)).